A 272-amino-acid chain; its full sequence is Putative protein-disulfide oxidoreductase RP025 (272 aa).

Positions 1–21 (MRNIFIVLIFLFLSNCSEVKA) are cleaved as a signal peptide. The 190-residue stretch at 74–263 (DSREQKKPEI…ISKAVDKALD (190 aa)) folds into the Thioredoxin domain. The cysteines at positions 116 and 119 are disulfide-linked.

It belongs to the thioredoxin family. DsbA subfamily.

It localises to the periplasm. Its function is as follows. May be required for disulfide bond formation in some proteins. This chain is Putative protein-disulfide oxidoreductase RP025, found in Rickettsia prowazekii (strain Madrid E).